Consider the following 494-residue polypeptide: Sulfate adenylyltransferase subunit 1 (494 aa).

One can recognise a tr-type G domain in the interval 28–242 (TRPLRLITCG…TLELATVRST (215 aa)). The interval 37 to 44 (GSVDDGKS) is G1. 37–44 (GSVDDGKS) serves as a coordination point for GTP. A G2 region spans residues 94–98 (GITID). The tract at residues 115 to 118 (DTPG) is G3. Residues 115–119 (DTPGH) and 170–173 (NKID) contribute to the GTP site. A G4 region spans residues 170 to 173 (NKID). A G5 region spans residues 207-209 (SAL).

This sequence belongs to the TRAFAC class translation factor GTPase superfamily. Classic translation factor GTPase family. CysN/NodQ subfamily. In terms of assembly, heterodimer composed of CysD, the smaller subunit, and CysN.

The enzyme catalyses sulfate + ATP + H(+) = adenosine 5'-phosphosulfate + diphosphate. It participates in sulfur metabolism; hydrogen sulfide biosynthesis; sulfite from sulfate: step 1/3. With CysD forms the ATP sulfurylase (ATPS) that catalyzes the adenylation of sulfate producing adenosine 5'-phosphosulfate (APS) and diphosphate, the first enzymatic step in sulfur assimilation pathway. APS synthesis involves the formation of a high-energy phosphoric-sulfuric acid anhydride bond driven by GTP hydrolysis by CysN coupled to ATP hydrolysis by CysD. This chain is Sulfate adenylyltransferase subunit 1, found in Agrobacterium fabrum (strain C58 / ATCC 33970) (Agrobacterium tumefaciens (strain C58)).